The sequence spans 627 residues: Alpha-terpineol synthase, chloroplastic (627 aa).

The transit peptide at methionine 1–arginine 53 directs the protein to the chloroplast. A disordered region spans residues alanine 13 to serine 90. Residues arginine 339, aspartate 376, aspartate 380, arginine 518, and aspartate 521 each contribute to the (2E)-geranyl diphosphate site. Residues aspartate 376 and aspartate 380 each coordinate Mg(2+). Positions aspartate 376–aspartate 380 match the DDXXD motif motif. Mg(2+)-binding residues include aspartate 521, serine 525, and glutamate 529.

It belongs to the terpene synthase family. Tpsb subfamily. Monomer. Mg(2+) serves as cofactor. Mn(2+) is required as a cofactor. In terms of tissue distribution, expressed in seedling leaf sheaths and roots.

It localises to the plastid. The protein resides in the chloroplast. It carries out the reaction (2E)-geranyl diphosphate + H2O = (S)-alpha-terpineol + diphosphate. The enzyme catalyses (2E)-geranyl diphosphate = (4S)-limonene + diphosphate. It catalyses the reaction (2E)-geranyl diphosphate = gamma-terpinene + diphosphate. The catalysed reaction is (2E)-geranyl diphosphate = beta-myrcene + diphosphate. It carries out the reaction (2E)-geranyl diphosphate = terpinolene + diphosphate. The enzyme catalyses (2E)-geranyl diphosphate + H2O = 4-terpineol + diphosphate. It participates in secondary metabolite biosynthesis; terpenoid biosynthesis. Functionally, component of the volatile terpenes biosynthesis pathways. Mediates the synthesis of a blend of monoterpenes. Converts mainly geranyl diphosphate to alpha-terpineol. Also triggers the biosynthesis of minor monoterpenes including limonene, gamma-terpinene, beta-myrcene, terpinolene and 4-terpineol. This chain is Alpha-terpineol synthase, chloroplastic, found in Zea mays (Maize).